Here is a 127-residue protein sequence, read N- to C-terminus: Glycine cleavage system H protein (127 aa).

The region spanning 22–104 (EVVIGITHFA…YEGAWMVKVE (83 aa)) is the Lipoyl-binding domain. The residue at position 63 (Lys63) is an N6-lipoyllysine.

The protein belongs to the GcvH family. The glycine cleavage system is composed of four proteins: P, T, L and H. The cofactor is (R)-lipoate.

In terms of biological role, the glycine cleavage system catalyzes the degradation of glycine. The H protein shuttles the methylamine group of glycine from the P protein to the T protein. Its function is as follows. Is also involved in protein lipoylation via its role as an octanoyl/lipoyl carrier protein intermediate. The sequence is that of Glycine cleavage system H protein from Bacillus cereus (strain B4264).